We begin with the raw amino-acid sequence, 151 residues long: MKKIELRPNGTKLVHTVNELPPETDQSFGKECDINFIVKKFIKTGQITHLARRQGFYGDQSSIPDFQTAMDTVTKAQQAFDELPAHMRKRFANSPHELMQFLQDPKNRDEAISLGLMEMVETPQQAPQSTTNQTTTKPAPASGEPTPVPTP.

Residues 120 to 151 (VETPQQAPQSTTNQTTTKPAPASGEPTPVPTP) are disordered. Positions 122 to 137 (TPQQAPQSTTNQTTTK) are enriched in polar residues.

The protein belongs to the microvidae B protein family.

The protein localises to the host cytoplasm. Functionally, participates in the assembly of the viral procapsid in the cytoplasm. Internal scaffolding protein VP3 is released from the procapsid upon genome packaging, possibly through affinity displacement by the protein VP8, or by proteolysis. This Bdellovibrio bacteriovorus (Bacteriophage phiMH2K) protein is Internal scaffolding protein VP3.